The primary structure comprises 2898 residues: Pericentrin (2898 aa).

The tract at residues 1–117 (MEDEQEQRRR…QPPPPQTAHS (117 aa)) is disordered. Positions 34-44 (SKKKTAKRKGS) are enriched in basic residues. At Ser44 the chain carries Phosphoserine. 2 coiled-coil regions span residues 127–343 (LNNM…IRLL) and 382–434 (AQQQ…DSLE). The disordered stretch occupies residues 429–460 (REDSLESTEISSSCVLPEETSGREGKEPPDPL). Residues 448–457 (TSGREGKEPP) are compositionally biased toward basic and acidic residues. Coiled-coil stretches lie at residues 468-527 (KVQE…LREK), 611-696 (CALQ…LETH), 727-787 (VADV…SLRM), and 872-939 (SQDQ…LRRL). Ser1022 is subject to Phosphoserine. 3 coiled-coil regions span residues 1069–1383 (EREF…QENM), 1429–1482 (NEVV…SLMG), and 1529–1593 (QLLA…AKEA). Ser1437 carries the post-translational modification Phosphoserine. Disordered stretches follow at residues 1745–1786 (VASR…DDVL), 1815–1880 (TQEK…PLTP), and 1958–1979 (TSPS…GPDI). Polar residues-rich tracts occupy residues 1747–1766 (SRDT…SENG) and 1817–1834 (EKLT…SGHS). The tract at residues 1801-1822 (NQDLLVQVEMPDFPTQEKLTSQ) is interaction with CDK5RAP2. Phosphoserine occurs at positions 1828, 1859, 1860, and 1959. The segment covering 1963–1976 (ELARRSDGSRKSDG) has biased composition (basic and acidic residues). Ser1987 is modified (phosphoserine). Polar residues predominate over residues 2046–2055 (SESQDPSSAL). The interval 2046–2088 (SESQDPSSALNKGEPRDPLDGFPRDSQALSEVTTDKGEKESLE) is disordered. 2 stretches are compositionally biased toward basic and acidic residues: residues 2058-2068 (GEPRDPLDGFP) and 2078-2088 (TTDKGEKESLE). Ser2128 bears the Phosphoserine mark. 2 coiled-coil regions span residues 2211 to 2403 (KVEQ…EALQ) and 2429 to 2590 (HALL…ELSM). Disordered stretches follow at residues 2509–2532 (VSGG…QFQE) and 2653–2684 (NRQS…QTTS). The interval 2545 to 2810 (LCAAGLLTSF…SQRQRSPSGP (266 aa)) is interaction with NEK2. The span at 2653 to 2671 (NRQSKSSLKQDGTDLQSSL) shows a compositional bias: polar residues. The calmodulin-binding stretch occupies residues 2758–2771 (KFRTAVRVVIAVLR). Residues 2787–2898 (ALVHPKSTRH…QKSCHQKIKQ (112 aa)) are disordered. Basic residues predominate over residues 2792-2802 (KSTRHGHRTSQ). Polar residues predominate over residues 2845–2860 (TSTPSSRLERSLTASQ). Over residues 2861–2874 (DPEHSLTEYIHHLE) the composition is skewed to basic and acidic residues. Phosphoserine is present on Ser2865.

Interacts with DISC1 and PCM1. Binds calmodulin. Interacts with CEP131. Interacts with CDK5RAP2; the interaction is leading to centrosomal localization of PCNT and CDK5RAP2. Interacts with CHD3. Interacts with CHD4; the interaction regulates centrosome integrity. Interacts with NEK2. Interacts with CCDC13. Interacts with CEP68. Interacts with ATF5; the ATF5:PCNT:polyglutamylated tubulin (PGT) tripartite unites the mother centriole and the pericentriolar material (PCM) in the centrosome. In terms of processing, cleaved during mitotis which leads to removal of CDK5RAP2 from the centrosome and promotes centriole disengagement and subsequent centriole separation. The C-terminal fragment is rapidly degraded following cleavage. Post-translationally, ubiquitinated by TRIM43; leading to proteasomal degradation. As to expression, expressed in heart and lung (at protein level). Expressed in kidney, thymus, liver, brain, muscle, testis, spleen, lung and heart.

It is found in the cytoplasm. It localises to the cytoskeleton. The protein resides in the microtubule organizing center. Its subcellular location is the centrosome. In terms of biological role, integral component of the filamentous matrix of the centrosome involved in the initial establishment of organized microtubule arrays in both mitosis and meiosis. Plays a role, together with DISC1, in the microtubule network formation. Is an integral component of the pericentriolar material (PCM). May play an important role in preventing premature centrosome splitting during interphase by inhibiting NEK2 kinase activity at the centrosome. In Mus musculus (Mouse), this protein is Pericentrin (Pcnt).